The primary structure comprises 55 residues: Small ribosomal subunit protein bS21 (55 aa).

This sequence belongs to the bacterial ribosomal protein bS21 family.

The chain is Small ribosomal subunit protein bS21 from Phytoplasma mali (strain AT).